The chain runs to 621 residues: Glutathione-regulated potassium-efflux system protein KefC (621 aa).

13 helical membrane-spanning segments follow: residues 4-24 (HTLI…PIAV), 26-46 (LGLG…PWAL), 54-74 (AILH…GLEL), 90-110 (GALQ…LLGL), 114-134 (VAEL…MQAM), 149-169 (FAVL…IPLL), 178-198 (LMAF…VVVL), 218-237 (VFSA…LEEV), 238-257 (GLSM…SSEY), 270-290 (GLLL…GTLV), 294-314 (LRIV…LWLI), 326-346 (RWFA…FGAA), and 359-379 (ALTL…VLLT). In terms of domain architecture, RCK N-terminal spans 399–518 (QPRVIVAGFG…AGVEAPERET (120 aa)). The interval 598-621 (GWQGTEEGRHTGDIADEPENKPSA) is disordered.

The protein belongs to the monovalent cation:proton antiporter 2 (CPA2) transporter (TC 2.A.37) family. KefC subfamily. Homodimer. Interacts with the regulatory subunit KefF.

It localises to the cell inner membrane. Pore-forming subunit of a potassium efflux system that confers protection against electrophiles. Catalyzes K(+)/H(+) antiport. The sequence is that of Glutathione-regulated potassium-efflux system protein KefC from Klebsiella pneumoniae subsp. pneumoniae (strain ATCC 700721 / MGH 78578).